The chain runs to 242 residues: Cysteine-rich venom protein VAR11 (242 aa).

Positions 1–19 (MILLKLYLTLAAILCQSRG) are cleaved as a signal peptide. The 129-residue stretch at 41–169 (NKHNDLRRTV…SLKYFQVCQY (129 aa)) folds into the SCP domain. 8 cysteine pairs are disulfide-bonded: C77–C156, C95–C170, C151–C167, C189–C196, C192–C201, C205–C237, C214–C231, and C223–C235. In terms of domain architecture, ShKT spans 205 to 237 (CAYNDDYTSCPDLTKQVGCNHPVTANCKASCQC).

This sequence belongs to the CRISP family. In terms of tissue distribution, expressed by the venom gland.

Its subcellular location is the secreted. Functionally, blocks ryanodine receptors, and potassium channels. In Varanus varius (Lace monitor lizard), this protein is Cysteine-rich venom protein VAR11.